The primary structure comprises 1157 residues: Probable ATP-dependent RNA helicase DHX37 (1157 aa).

Residues 1-10 (MGKLRRRYNI) show a composition bias toward basic residues. Disordered regions lie at residues 1 to 77 (MGKL…KKEK) and 116 to 225 (TSKL…AAPP). Pro residues predominate over residues 21-30 (SKGPPEPPPV). A compositionally biased stretch (acidic residues) spans 159–184 (AEEEEEEEEESESELEEESELDEDPA). 2 stretches are compositionally biased toward pro residues: residues 198-208 (PLPPAPAPSSQ) and 216-225 (VPPPPAAAPP). The Helicase ATP-binding domain occupies 262–429 (MEAVAEHPIV…PRLFAKPPPV (168 aa)). 275 to 282 (GETGSGKT) serves as a coordination point for ATP. The DEAH box motif lies at 372 to 375 (DEAH). One can recognise a Helicase C-terminal domain in the interval 459–716 (KVCKIHRMLP…DLILQMKALN (258 aa)). Disordered regions lie at residues 494–523 (PPSRARPQEKDDDQKDSVEEMRKFKKSRAR) and 542–584 (VLPA…QPDA). Positions 499-515 (RPQEKDDDQKDSVEEMR) are enriched in basic and acidic residues. The segment covering 547 to 571 (EGDEDREAEVDEEEGALDSDLDLDL) has biased composition (acidic residues).

Belongs to the DEAD box helicase family. DEAH subfamily. Part of the small subunit (SSU) processome, composed of more than 70 proteins and the RNA chaperone small nucleolar RNA (snoRNA) U3. Interacts with UTP14A. As to expression, expressed in the fallopian tube, ovary, uterus and testis. Also expressed in the brain.

The protein localises to the nucleus. Its subcellular location is the nucleolus. The protein resides in the cytoplasm. It localises to the nucleus membrane. The enzyme catalyses ATP + H2O = ADP + phosphate + H(+). In terms of biological role, ATP-binding RNA helicase that plays a role in maturation of the small ribosomal subunit in ribosome biogenesis. Required for the release of the U3 snoRNP from pre-ribosomal particles. Part of the small subunit (SSU) processome, first precursor of the small eukaryotic ribosomal subunit. During the assembly of the SSU processome in the nucleolus, many ribosome biogenesis factors, an RNA chaperone and ribosomal proteins associate with the nascent pre-rRNA and work in concert to generate RNA folding, modifications, rearrangements and cleavage as well as targeted degradation of pre-ribosomal RNA by the RNA exosome. Plays a role in early testis development. Probably also plays a role in brain development. In Homo sapiens (Human), this protein is Probable ATP-dependent RNA helicase DHX37.